The sequence spans 419 residues: Inner ear-specific collagen (419 aa).

Positions 1–19 (MDAYSLSPTDSTTYSSDTF) are cleaved as a signal peptide. Positions 20 to 57 (STEFHTDAIAPPGNTPGNYTLDYNECFFNFCECCPPEK) are nonhelical region (NC2). An N-linked (GlcNAc...) asparagine glycan is attached at N37. The interval 58 to 274 (GPMGPMGERG…RGPKGPPGES (217 aa)) is triple-helical region (COL1). Residues 63–275 (MGERGLPGPP…GPKGPPGESV (213 aa)) form a disordered region. 2 stretches are compositionally biased toward basic and acidic residues: residues 129 to 144 (PGEKGDPGLKGDKGER) and 184 to 202 (LKGEQGLKGECLQGEKGER). Over residues 227–236 (GPLGGKGDTG) the composition is skewed to gly residues. The C1q domain occupies 275-412 (VEQIRSAFSV…GFLLYPDTKK (138 aa)). The segment at 275 to 419 (VEQIRSAFSV…TKKPTAMENL (145 aa)) is nonhelical region (NC1). An N-linked (GlcNAc...) asparagine glycan is attached at N320.

Specialized secretory supporting cells at the outer perimeter of the saccular epithelium.

The protein localises to the secreted. It is found in the extracellular space. Its subcellular location is the extracellular matrix. In terms of biological role, forms a microstructural matrix within the otolithic membrane. This is Inner ear-specific collagen from Lepomis macrochirus (Bluegill).